We begin with the raw amino-acid sequence, 261 residues long: Class II histocompatibility antigen, M alpha chain (261 aa).

The N-terminal stretch at 1–26 is a signal peptide; it reads MEHEQKSGAVLLRLLRLLWLLPHSWA. The segment at 27 to 124 is alpha-1; the sequence is VLEASTPVLW…KLEGQIPVSR (98 aa). The Lumenal segment spans residues 27 to 231; it reads VLEASTPVLW…ALPSDLLENA (205 aa). The N-linked (GlcNAc...) asparagine glycan is linked to N41. 2 disulfide bridges follow: C50–C105 and C147–C202. The Ig-like C1-type domain maps to 114–215; the sequence is PKLEGQIPVS…HEIDRYTAIA (102 aa). An alpha-2 region spans residues 125–217; the sequence is GLSVAEVFTL…IDRYTAIAYW (93 aa). A connecting peptide region spans residues 218 to 231; sequence VPQNALPSDLLENA. The helical transmembrane segment at 232-252 threads the bilayer; the sequence is LCGVAFALGVLGTIIGIVFFL. Residues 253-261 lie on the Cytoplasmic side of the membrane; that stretch reads CSQRPCSGD.

The protein belongs to the MHC class II family. As to quaternary structure, heterodimer of an alpha chain (DMA) and a beta chain (DMB). Interacts with MHCII; this interaction mediates rapid selection of high-affinity peptides.

Its subcellular location is the late endosome membrane. It is found in the lysosome membrane. In terms of biological role, plays a critical role in catalyzing the release of class II-associated invariant chain peptide (CLIP) from newly synthesized MHC class II molecules and freeing the peptide binding site for acquisition of antigenic peptides. In Mus musculus (Mouse), this protein is Class II histocompatibility antigen, M alpha chain (H2-DMa).